Reading from the N-terminus, the 37-residue chain is 24 kDa antigen (37 aa).

The protein is 24 kDa antigen of Plasmodium chabaudi.